Reading from the N-terminus, the 420-residue chain is UDP-N-acetylmuramoylalanine--D-glutamate ligase (420 aa).

109 to 115 (GSAGKTT) is an ATP binding site.

It belongs to the MurCDEF family.

It is found in the cytoplasm. The enzyme catalyses UDP-N-acetyl-alpha-D-muramoyl-L-alanine + D-glutamate + ATP = UDP-N-acetyl-alpha-D-muramoyl-L-alanyl-D-glutamate + ADP + phosphate + H(+). Its pathway is cell wall biogenesis; peptidoglycan biosynthesis. Functionally, cell wall formation. Catalyzes the addition of glutamate to the nucleotide precursor UDP-N-acetylmuramoyl-L-alanine (UMA). This chain is UDP-N-acetylmuramoylalanine--D-glutamate ligase, found in Chlamydia abortus (strain DSM 27085 / S26/3) (Chlamydophila abortus).